We begin with the raw amino-acid sequence, 86 residues long: U15-lycotoxin-Ls1c (86 aa).

Residues 1–20 (MNSKIFAVLLLLAFLSCVLS) form the signal peptide. Positions 21–66 (DQYCPKSSITACKKMNIRNDCCKDDDCTGGSWCCATPCGNICKYPT) constitute a WAP domain. Intrachain disulfides connect cysteine 24–cysteine 54, cysteine 32–cysteine 58, cysteine 41–cysteine 53, cysteine 42–cysteine 80, and cysteine 47–cysteine 62.

This sequence belongs to the venom protein 11 family. 01 (wap-1) subfamily. In terms of processing, contains 5 disulfide bonds. In terms of tissue distribution, expressed by the venom gland.

The protein localises to the secreted. In terms of biological role, has antibacterial activity. The sequence is that of U15-lycotoxin-Ls1c from Lycosa singoriensis (Wolf spider).